Here is a 195-residue protein sequence, read N- to C-terminus: Flavin prenyltransferase UbiX (195 aa).

FMN-binding positions include 17-19 (GGS), Ser43, 94-97 (SAGT), and Arg129. Tyr159 and Arg175 together coordinate dimethylallyl phosphate.

The protein belongs to the UbiX/PAD1 family.

It carries out the reaction dimethylallyl phosphate + FMNH2 = prenylated FMNH2 + phosphate. In terms of biological role, flavin prenyltransferase that catalyzes the synthesis of the prenylated FMN cofactor (prenyl-FMN) for 4-hydroxy-3-polyprenylbenzoic acid decarboxylase UbiD. The prenyltransferase is metal-independent and links a dimethylallyl moiety from dimethylallyl monophosphate (DMAP) to the flavin N5 and C6 atoms of FMN. This Deinococcus radiodurans (strain ATCC 13939 / DSM 20539 / JCM 16871 / CCUG 27074 / LMG 4051 / NBRC 15346 / NCIMB 9279 / VKM B-1422 / R1) protein is Flavin prenyltransferase UbiX.